The primary structure comprises 122 residues: UPF0102 protein XOO3839 (122 aa).

The protein belongs to the UPF0102 family.

The chain is UPF0102 protein XOO3839 from Xanthomonas oryzae pv. oryzae (strain KACC10331 / KXO85).